The primary structure comprises 426 residues: MSAPLADIDPDIAGLLGQELGRQRDTLEMIASENFVPRAVLQAQGSVLTNKYAEGLPGRRYYGGCEYVDVVENIARDRAKALFDADFANVQPHSGAQANAAVLHALMTPGERLLGLDLANGGHLTHGMKLNFSGKLYDVGFYGVDPTTHLIDMDAVRAKALEFRPKVIIAGWSAYPRVLDFAAFASIADEVGAKLWVDMAHFAGLVAAGLHPSPVPHADVVSTTVHKTLGGPRSGLILGKQEYAKSINSAVFPGQQGGPLMHVIAAKAVALKIAGTEEFADRQRRTLSGARILAERLSGADVAAAGVSVVSGGTDVHLVLVDLRNSELDGQAAEDLLHEIGITVNRNAVPNDPRPPMVTSGLRVGTPALATRGFGGAEFSEVADVIATALAGGRGADLAALRDRVTRLARDFPLYEGLEDWALVGR.

(6S)-5,6,7,8-tetrahydrofolate is bound by residues leucine 118 and 122 to 124; that span reads GHL. Position 227 is an N6-(pyridoxal phosphate)lysine (lysine 227).

The protein belongs to the SHMT family. In terms of assembly, homodimer. Pyridoxal 5'-phosphate is required as a cofactor.

Its subcellular location is the cytoplasm. It catalyses the reaction (6R)-5,10-methylene-5,6,7,8-tetrahydrofolate + glycine + H2O = (6S)-5,6,7,8-tetrahydrofolate + L-serine. Its pathway is one-carbon metabolism; tetrahydrofolate interconversion. It participates in amino-acid biosynthesis; glycine biosynthesis; glycine from L-serine: step 1/1. In terms of biological role, catalyzes the reversible interconversion of serine and glycine with tetrahydrofolate (THF) serving as the one-carbon carrier. This reaction serves as the major source of one-carbon groups required for the biosynthesis of purines, thymidylate, methionine, and other important biomolecules. Also exhibits THF-independent aldolase activity toward beta-hydroxyamino acids, producing glycine and aldehydes, via a retro-aldol mechanism. In Mycolicibacterium paratuberculosis (strain ATCC BAA-968 / K-10) (Mycobacterium paratuberculosis), this protein is Serine hydroxymethyltransferase.